The sequence spans 171 residues: 3-hydroxydecanoyl-[acyl-carrier-protein] dehydratase (171 aa).

The active site involves histidine 70.

Belongs to the thioester dehydratase family. FabA subfamily. As to quaternary structure, homodimer.

It localises to the cytoplasm. It carries out the reaction a (3R)-hydroxyacyl-[ACP] = a (2E)-enoyl-[ACP] + H2O. The catalysed reaction is (3R)-hydroxydecanoyl-[ACP] = (2E)-decenoyl-[ACP] + H2O. It catalyses the reaction (2E)-decenoyl-[ACP] = (3Z)-decenoyl-[ACP]. It functions in the pathway lipid metabolism; fatty acid biosynthesis. Its function is as follows. Necessary for the introduction of cis unsaturation into fatty acids. Catalyzes the dehydration of (3R)-3-hydroxydecanoyl-ACP to E-(2)-decenoyl-ACP and then its isomerization to Z-(3)-decenoyl-ACP. Can catalyze the dehydratase reaction for beta-hydroxyacyl-ACPs with saturated chain lengths up to 16:0, being most active on intermediate chain length. The polypeptide is 3-hydroxydecanoyl-[acyl-carrier-protein] dehydratase (Ectopseudomonas mendocina (strain ymp) (Pseudomonas mendocina)).